Consider the following 163-residue polypeptide: Peptide methionine sulfoxide reductase MsrA (163 aa).

Cys-10 is an active-site residue.

Belongs to the MsrA Met sulfoxide reductase family.

The enzyme catalyses L-methionyl-[protein] + [thioredoxin]-disulfide + H2O = L-methionyl-(S)-S-oxide-[protein] + [thioredoxin]-dithiol. It catalyses the reaction [thioredoxin]-disulfide + L-methionine + H2O = L-methionine (S)-S-oxide + [thioredoxin]-dithiol. In terms of biological role, has an important function as a repair enzyme for proteins that have been inactivated by oxidation. Catalyzes the reversible oxidation-reduction of methionine sulfoxide in proteins to methionine. In Ruthia magnifica subsp. Calyptogena magnifica, this protein is Peptide methionine sulfoxide reductase MsrA.